The primary structure comprises 637 residues: Nuclear receptor-binding protein homolog (637 aa).

Polar residues predominate over residues 1–14 (MSNSQANAGISGST). 2 disordered regions span residues 1–60 (MSNS…TADA) and 74–99 (SEGV…ILEE). Over residues 36-46 (PAATPPSQSTQ) the composition is skewed to low complexity. The span at 88–98 (DDSEDESEILE) shows a compositional bias: acidic residues. One can recognise a Protein kinase domain in the interval 109-375 (REEVDQRDVP…ANDLLFHPLL (267 aa)). Disordered regions lie at residues 465 to 489 (PNFR…EPVD) and 617 to 637 (PQEQ…TTSN). Phosphoserine occurs at positions 473, 479, and 482. Position 484 is a phosphothreonine (Thr484).

The protein belongs to the protein kinase superfamily. Ser/Thr protein kinase family.

It localises to the cytoplasm. The protein resides in the cell cortex. In terms of biological role, may play a role in subcellular trafficking between the endoplasmic reticulum and Golgi apparatus. This Drosophila melanogaster (Fruit fly) protein is Nuclear receptor-binding protein homolog.